Reading from the N-terminus, the 498-residue chain is Trichoplein keratin filament-binding protein (498 aa).

A coiled-coil region spans residues 11–39 (CSQQRLNQQLARQREQEARLRQQWEQNSR). Glycyl lysine isopeptide (Lys-Gly) (interchain with G-Cter in ubiquitin) cross-links involve residues lysine 50 and lysine 57. Coiled-coil stretches lie at residues 66 to 136 (AYQR…LIAE), 163 to 353 (VNSW…LREE), and 380 to 479 (LTGR…EAET). The interval 73–498 (KEEKRRSLEA…PYGHPKIAWN (426 aa)) is interaction with keratin proteins. The tract at residues 167 to 189 (EMQKEEKKQQEATAEQENKRYEN) is disordered. A compositionally biased stretch (basic and acidic residues) spans 168-189 (MQKEEKKQQEATAEQENKRYEN). The segment at 259-425 (KQMEAFRQKA…RELARREKEE (167 aa)) is trichohyalin/plectin homology domain. Residues 447–498 (QAWEADQQEEEEEEEARRVEQLSDALLQQEAETMAEQGYRPKPYGHPKIAWN) are disordered.

This sequence belongs to the TCHP family. In terms of assembly, interacts specifically with keratin proteins including, KRT5, KRT6A, KRT8, KRT14, KRT16 and KRT18. Interacts with KCTD17. Ubiquitinated. Ubiquitination by the BCR(KCTD17) E3 ubiquitin ligase complex results in proteasomal degradation, and induces ciliogenesis. As to expression, expressed at high levels in normal urothelial and breast epithelial cells. Also expressed in the smooth muscle and endothelial cells. Reduced expression seen in advanced bladder and breast carcinomas (at protein level). Ubiquitous. Expressed at highest levels in the heart, skeletal muscle, kidney, liver and testis.

It localises to the cytoplasm. It is found in the cytoskeleton. Its subcellular location is the cell membrane. The protein localises to the mitochondrion. The protein resides in the cell junction. It localises to the desmosome. It is found in the microtubule organizing center. Its subcellular location is the centrosome. Its function is as follows. Tumor suppressor which has the ability to inhibit cell growth and be pro-apoptotic during cell stress. Inhibits cell growth in bladder and prostate cancer cells by a down-regulation of HSPB1 by inhibiting its phosphorylation. May act as a 'capping' or 'branching' protein for keratin filaments in the cell periphery. May regulate K8/K18 filament and desmosome organization mainly at the apical or peripheral regions of simple epithelial cells. Is a negative regulator of ciliogenesis. The sequence is that of Trichoplein keratin filament-binding protein from Homo sapiens (Human).